A 271-amino-acid chain; its full sequence is Phosphatidylglycerol--prolipoprotein diacylglyceryl transferase (271 aa).

Helical transmembrane passes span 21 to 41, 60 to 80, 95 to 115, 124 to 144, 176 to 196, 203 to 223, and 230 to 250; these read ISVR…MWLA, LLFA…VLFY, VWTG…AMLW, FFGV…VGRL, SQLY…NWFI, GSVS…VEYV, and LGLF…MIIG. Residue arginine 143 participates in a 1,2-diacyl-sn-glycero-3-phospho-(1'-sn-glycerol) binding.

The protein belongs to the Lgt family.

Its subcellular location is the cell inner membrane. It catalyses the reaction L-cysteinyl-[prolipoprotein] + a 1,2-diacyl-sn-glycero-3-phospho-(1'-sn-glycerol) = an S-1,2-diacyl-sn-glyceryl-L-cysteinyl-[prolipoprotein] + sn-glycerol 1-phosphate + H(+). It functions in the pathway protein modification; lipoprotein biosynthesis (diacylglyceryl transfer). Functionally, catalyzes the transfer of the diacylglyceryl group from phosphatidylglycerol to the sulfhydryl group of the N-terminal cysteine of a prolipoprotein, the first step in the formation of mature lipoproteins. The sequence is that of Phosphatidylglycerol--prolipoprotein diacylglyceryl transferase from Vibrio vulnificus (strain CMCP6).